The chain runs to 235 residues: Caveolin-1 (235 aa).

Residues 1–161 (MSTEQDIKTE…LVSLLALPFT (161 aa)) are Cytoplasmic-facing. The disordered stretch occupies residues 29-72 (GEAVVAPEEPKPKKNWFTFGKKKAAPTDETNIEEGGAPGDEPVK). Residues 162 to 182 (IIFAIFFGLLASINVFIIVPL) constitute an intramembrane region (helical). Residues 183-235 (GKLLSIPGTLLAKLWNWLIHAIFDPIASAVGLIFSNFNIRKYGINQETTAPCV) are Cytoplasmic-facing. A lipid anchor (S-palmitoyl cysteine) is attached at C234.

This sequence belongs to the caveolin family. As to quaternary structure, homooligomer containing 14-16 monomers per oligomer.

Its subcellular location is the golgi apparatus membrane. The protein resides in the cell membrane. It is found in the membrane. It localises to the caveola. May act as a scaffolding protein within caveolar membranes. Interacts directly with G-protein alpha subunits and can functionally regulate their activity. The sequence is that of Caveolin-1 (cav-1) from Caenorhabditis elegans.